We begin with the raw amino-acid sequence, 163 residues long: Pheromone-binding protein (163 aa).

An N-terminal signal peptide occupies residues 1–21 (MLRKISLLLLPVFVAINLVHS). Disulfide bonds link C40/C75, C71/C129, and C118/C138.

This sequence belongs to the PBP/GOBP family. Homodimer. Antenna.

Functionally, this major soluble protein in olfactory sensilla of male moths might serve to solubilize the extremely hydrophobic pheromone molecules and to transport pheromone through the aqueous lymph to receptors located on olfactory cilia. This Antheraea polyphemus (Polyphemus moth) protein is Pheromone-binding protein.